The primary structure comprises 355 residues: 3-dehydroquinate synthase (355 aa).

Residues 71 to 76, 105 to 109, 129 to 130, K142, K151, and 169 to 172 each bind NAD(+); these read EGEASK, GVVGD, TS, and TLKT. Residues E184, H246, and H263 each coordinate Zn(2+).

It belongs to the sugar phosphate cyclases superfamily. Dehydroquinate synthase family. It depends on Co(2+) as a cofactor. Zn(2+) is required as a cofactor. The cofactor is NAD(+).

The protein localises to the cytoplasm. It catalyses the reaction 7-phospho-2-dehydro-3-deoxy-D-arabino-heptonate = 3-dehydroquinate + phosphate. Its pathway is metabolic intermediate biosynthesis; chorismate biosynthesis; chorismate from D-erythrose 4-phosphate and phosphoenolpyruvate: step 2/7. Functionally, catalyzes the conversion of 3-deoxy-D-arabino-heptulosonate 7-phosphate (DAHP) to dehydroquinate (DHQ). The chain is 3-dehydroquinate synthase from Streptococcus suis (strain 98HAH33).